The following is a 98-amino-acid chain: NADH-ubiquinone oxidoreductase chain 4L (98 aa).

The next 3 membrane-spanning stretches (helical) occupy residues 1–21 (MSMV…GLLM), 29–49 (SLLC…LTIL), and 61–81 (IILL…LVMV).

This sequence belongs to the complex I subunit 4L family. As to quaternary structure, core subunit of respiratory chain NADH dehydrogenase (Complex I) which is composed of 45 different subunits.

It is found in the mitochondrion inner membrane. The catalysed reaction is a ubiquinone + NADH + 5 H(+)(in) = a ubiquinol + NAD(+) + 4 H(+)(out). In terms of biological role, core subunit of the mitochondrial membrane respiratory chain NADH dehydrogenase (Complex I) which catalyzes electron transfer from NADH through the respiratory chain, using ubiquinone as an electron acceptor. Part of the enzyme membrane arm which is embedded in the lipid bilayer and involved in proton translocation. The protein is NADH-ubiquinone oxidoreductase chain 4L (MT-ND4L) of Bos indicus (Zebu).